Here is a 635-residue protein sequence, read N- to C-terminus: ATP-dependent zinc metalloprotease FtsH (635 aa).

Over 1 to 4 the chain is Cytoplasmic; sequence MVKN. A helical membrane pass occupies residues 5 to 25; it reads LVLWVVVAVIMMTAYQSFNSS. The Periplasmic segment spans residues 26-97; sequence SVENSTDYTT…VEGTPFERRG (72 aa). Residues 98-118 form a helical membrane-spanning segment; the sequence is FLSQILISWFPMLFLVGVWVF. At 119 to 635 the chain is on the cytoplasmic side; sequence FMRQMQGGGG…AVENTDDFNV (517 aa). 191–198 provides a ligand contact to ATP; that stretch reads GPPGTGKT. A Zn(2+)-binding site is contributed by H413. E414 is an active-site residue. H417 and D491 together coordinate Zn(2+). A disordered region spans residues 593–635; the sequence is NREPVTPPSGWGEPKTQQAAYANSTTNDTKPESAVENTDDFNV. Over residues 607–620 the composition is skewed to polar residues; it reads KTQQAAYANSTTND.

It in the central section; belongs to the AAA ATPase family. The protein in the C-terminal section; belongs to the peptidase M41 family. In terms of assembly, homohexamer. Zn(2+) serves as cofactor.

It is found in the cell inner membrane. Functionally, acts as a processive, ATP-dependent zinc metallopeptidase for both cytoplasmic and membrane proteins. Plays a role in the quality control of integral membrane proteins. This chain is ATP-dependent zinc metalloprotease FtsH, found in Haemophilus influenzae (strain ATCC 51907 / DSM 11121 / KW20 / Rd).